A 1959-amino-acid chain; its full sequence is Myosin-9 (1959 aa).

A Myosin N-terminal SH3-like domain is found at 27-77 (AAKKLVWVPSEKSGFEAASLKEEVGDEAIVELAENGKKVKVNKDDIQKMNP). The Myosin motor domain maps to 81-776 (SKVEDMAELT…VLAHLEEERD (696 aa)). 174–181 (GESGAGKT) is a binding site for ATP. The tract at residues 654-676 (LAKLMATLRNTNPNFVRCIIPNH) is actin-binding. The 30-residue stretch at 779 to 808 (ITDVIIGFQACCRGYLARKAFAKRQQQLTA) folds into the IQ domain. Residues 837–1925 (LLQVSRQEEE…LKSKLRRGDL (1089 aa)) are a coiled coil. 4 disordered regions span residues 1118–1168 (EDLE…REQE), 1694–1717 (RAKRQAQQERDELADEIANSSGKG), 1879–1917 (LEEAEEEAQRANVRRKLQRELDDATETADAMNREVSSLK), and 1936–1959 (KGTGECSDEEVDGKAEAGDAKATE). Composition is skewed to basic and acidic residues over residues 1122-1148 (SERASRNKAEKQKRDLGEELEALKTEL) and 1694-1704 (RAKRQAQQERD). Residues 1947-1959 (DGKAEAGDAKATE) show a composition bias toward basic and acidic residues.

This sequence belongs to the TRAFAC class myosin-kinesin ATPase superfamily. Myosin family. Myosin is a hexameric protein that consists of 2 heavy chain subunits (MHC), 2 alkali light chain subunits (MLC) and 2 regulatory light chain subunits (MLC-2). Expressed in fibroblasts, brain, lung, kidney, spleen, and skeletal, cardiac and smooth muscles.

Its subcellular location is the cytoplasm. It localises to the cytoskeleton. The protein localises to the cell cortex. It is found in the cytoplasmic vesicle. The protein resides in the secretory vesicle. Its subcellular location is the cortical granule. Its function is as follows. Cellular myosin that appears to play a role in cytokinesis, cell shape, and specialized functions such as secretion and capping. The polypeptide is Myosin-9 (MYH9) (Gallus gallus (Chicken)).